The chain runs to 548 residues: Membrane protein insertase YidC (548 aa).

The chain crosses the membrane as a helical span at residues 6 to 26 (NLLVIALLFVSFMIWQAWEQD). Residues 28–55 (NPQPQAQQTTQTTTTAAGSAADQGVPAS) form a disordered region. Over residues 30-50 (QPQAQQTTQTTTTAAGSAADQ) the composition is skewed to low complexity. 4 consecutive transmembrane segments (helical) span residues 350 to 370 (FVGN…GIMY), 420 to 440 (LGGC…YYML), 458 to 478 (LSAQ…MFFI), and 499 to 519 (PVIF…YYIV).

The protein belongs to the OXA1/ALB3/YidC family. Type 1 subfamily. As to quaternary structure, interacts with the Sec translocase complex via SecD. Specifically interacts with transmembrane segments of nascent integral membrane proteins during membrane integration.

It is found in the cell inner membrane. In terms of biological role, required for the insertion and/or proper folding and/or complex formation of integral membrane proteins into the membrane. Involved in integration of membrane proteins that insert both dependently and independently of the Sec translocase complex, as well as at least some lipoproteins. Aids folding of multispanning membrane proteins. The protein is Membrane protein insertase YidC of Escherichia fergusonii (strain ATCC 35469 / DSM 13698 / CCUG 18766 / IAM 14443 / JCM 21226 / LMG 7866 / NBRC 102419 / NCTC 12128 / CDC 0568-73).